Reading from the N-terminus, the 616-residue chain is Chaperone protein HscA homolog (616 aa).

The protein belongs to the heat shock protein 70 family.

Functionally, chaperone involved in the maturation of iron-sulfur cluster-containing proteins. Has a low intrinsic ATPase activity which is markedly stimulated by HscB. This is Chaperone protein HscA homolog from Vibrio cholerae serotype O1 (strain M66-2).